Here is an 88-residue protein sequence, read N- to C-terminus: MAHKKAGGSSRNGRDSAGQRRGVKRYGGEFVRAGNILVRQLGTKFHPGKNVGLGRDYTLFAMIDGIVAFEYKDKTRQQISVYPIPAQE.

The tract at residues 1–24 (MAHKKAGGSSRNGRDSAGQRRGVK) is disordered.

Belongs to the bacterial ribosomal protein bL27 family.

The chain is Large ribosomal subunit protein bL27 from Syntrophobacter fumaroxidans (strain DSM 10017 / MPOB).